The following is a 927-amino-acid chain: Protein unc-45 homolog B (927 aa).

TPR repeat units follow at residues Pro4–Lys37, Ala41–Asp74, and Lys76–Asn108. 3 ARM repeats span residues Asp167–Thr206, Arg209–Asp248, and Asp746–Leu785.

Detected initially throughout the somites and the heart and gradually also expressed in the jaw, branchial arches and body wall muscles at later embryonic stages.

Its subcellular location is the cytoplasm. It is found in the myofibril. The protein localises to the sarcomere. It localises to the z line. The protein resides in the a band. Its subcellular location is the perinuclear region. It is found in the cytosol. Functionally, acts as a co-chaperone for HSP90 and is required for proper folding of the myosin motor domain. Plays a role in sarcomere formation during muscle cell development. Is necessary for normal early lens development. The sequence is that of Protein unc-45 homolog B from Xenopus tropicalis (Western clawed frog).